The sequence spans 460 residues: Metal cation symporter ZIP8 (460 aa).

An N-terminal signal peptide occupies residues Met-1–Ala-22. Over Glu-23–Gly-132 the chain is Extracellular. Asn-40 and Asn-88 each carry an N-linked (GlcNAc...) asparagine glycan. The helical transmembrane segment at Phe-133–Ile-153 threads the bilayer. The Cytoplasmic segment spans residues Lys-154–Lys-160. Residues Ile-161–Leu-181 form a helical membrane-spanning segment. Residues Ile-182 to Lys-191 are Extracellular-facing. The chain crosses the membrane as a helical span at residues Val-192 to Phe-212. The Cytoplasmic segment spans residues Glu-213 to Ala-365. The short motif at Glu-343–Glu-348 is the XEXPHE-motif element. The chain crosses the membrane as a helical span at residues Leu-366–Val-386. Topologically, residues Gly-387–Asn-388 are extracellular. The chain crosses the membrane as a helical span at residues Asn-389–Ala-409. Residues Asp-410–Asp-429 are Cytoplasmic-facing. A helical membrane pass occupies residues Phe-430–Ile-450. Residues Thr-451–Glu-460 lie on the Extracellular side of the membrane.

Belongs to the ZIP transporter (TC 2.A.5) family. In terms of assembly, homodimer. In terms of processing, N-glycosylated. N-glycosylation is not required for proper iron and zinc transport. In terms of tissue distribution, ubiquitously expressed. Expressed in thymus, placenta, lung, liver, pancreas, salivary gland and, to a lower extent, in spleen, testis, ovary, small intestine, colon, leukocyte, heart. Highest expression is observed in pancreas. Expressed by macrophages (at protein level). Expressed by microvascular capillary endothelial cells that constitute the blood-brain barrier (at protein level).

It is found in the cell membrane. The protein localises to the lysosome membrane. The protein resides in the apical cell membrane. Its subcellular location is the basolateral cell membrane. It carries out the reaction Zn(2+)(out) + 2 hydrogencarbonate(out) = Zn(2+)(in) + 2 hydrogencarbonate(in). It catalyses the reaction selenite(out) + Zn(2+)(out) + hydrogencarbonate(out) = selenite(in) + Zn(2+)(in) + hydrogencarbonate(in). The enzyme catalyses Mn(2+)(out) + 2 hydrogencarbonate(out) = Mn(2+)(in) + 2 hydrogencarbonate(in). The catalysed reaction is Fe(2+)(out) + 2 hydrogencarbonate(out) = Fe(2+)(in) + 2 hydrogencarbonate(in). It carries out the reaction Cd(2+)(out) + 2 hydrogencarbonate(out) = Cd(2+)(in) + 2 hydrogencarbonate(in). It catalyses the reaction Co(2+)(out) + 2 hydrogencarbonate(out) = Co(2+)(in) + 2 hydrogencarbonate(in). In terms of biological role, electroneutral divalent metal cation:bicarbonate symporter of the plasma membrane mediating the cellular uptake of zinc and manganese, two divalent metal cations important for development, tissue homeostasis and immunity. Transports an electroneutral complex composed of a divalent metal cation and two bicarbonate anions or alternatively a bicarbonate and a selenite anion. Thereby, it also contributes to the cellular uptake of selenium, an essential trace metal and micronutrient. Also imports cadmium a non-essential metal which is cytotoxic and carcinogenic. May also transport iron and cobalt through membranes. Through zinc import, indirectly regulates the metal-dependent transcription factor MTF1 and the expression of some metalloproteases involved in cartilage catabolism and also probably heart development. Also indirectly regulates the expression of proteins involved in cell morphology and cytoskeleton organization. Indirectly controls innate immune function and inflammatory response by regulating zinc cellular uptake which in turn modulates the expression of genes specific of these processes. Protects, for instance, cells from injury and death at the onset of inflammation. By regulating zinc influx into monocytes also directly modulates their adhesion to endothelial cells and arteries. Reclaims manganese from the bile at the apical membrane of hepatocytes, thereby regulating the activity of the manganese-dependent enzymes through the systemic levels of the nutrient. Also participates in manganese reabsorption in the proximal tubule of the kidney. By mediating the extracellular uptake of manganese by cells of the blood-brain barrier, may also play a role in the transport of the micronutrient to the brain. With manganese cellular uptake also participates in mitochondrial proper function. Finally, also probably functions intracellularly, translocating zinc from lysosome to cytosol to indirectly enhance the expression of specific genes during TCR-mediated T cell activation. The sequence is that of Metal cation symporter ZIP8 from Homo sapiens (Human).